A 302-amino-acid chain; its full sequence is tRNA pseudouridine synthase B (302 aa).

The active-site Nucleophile is the Asp38.

The protein belongs to the pseudouridine synthase TruB family. Type 1 subfamily.

It catalyses the reaction uridine(55) in tRNA = pseudouridine(55) in tRNA. In terms of biological role, responsible for synthesis of pseudouridine from uracil-55 in the psi GC loop of transfer RNAs. The protein is tRNA pseudouridine synthase B of Ligilactobacillus salivarius (strain UCC118) (Lactobacillus salivarius).